The chain runs to 316 residues: Biotin synthase (316 aa).

One can recognise a Radical SAM core domain in the interval 36–264; that stretch reads TEIQISTLLS…ASRVRLAAGR (229 aa). Residues Cys51, Cys55, and Cys58 each contribute to the [4Fe-4S] cluster site. [2Fe-2S] cluster contacts are provided by Cys96, Cys127, Cys187, and Arg259.

Belongs to the radical SAM superfamily. Biotin synthase family. Homodimer. The cofactor is [4Fe-4S] cluster. Requires [2Fe-2S] cluster as cofactor.

The enzyme catalyses (4R,5S)-dethiobiotin + (sulfur carrier)-SH + 2 reduced [2Fe-2S]-[ferredoxin] + 2 S-adenosyl-L-methionine = (sulfur carrier)-H + biotin + 2 5'-deoxyadenosine + 2 L-methionine + 2 oxidized [2Fe-2S]-[ferredoxin]. Its pathway is cofactor biosynthesis; biotin biosynthesis; biotin from 7,8-diaminononanoate: step 2/2. Catalyzes the conversion of dethiobiotin (DTB) to biotin by the insertion of a sulfur atom into dethiobiotin via a radical-based mechanism. The chain is Biotin synthase from Gluconacetobacter diazotrophicus (strain ATCC 49037 / DSM 5601 / CCUG 37298 / CIP 103539 / LMG 7603 / PAl5).